A 112-amino-acid chain; its full sequence is Cytochrome c (112 aa).

Heme c-binding residues include Cys-23, Cys-26, His-27, and Met-89.

The protein belongs to the cytochrome c family. In terms of processing, binds 1 heme c group covalently per subunit.

The protein localises to the mitochondrion intermembrane space. Functionally, electron carrier protein. The oxidized form of the cytochrome c heme group can accept an electron from the heme group of the cytochrome c1 subunit of cytochrome reductase. Cytochrome c then transfers this electron to the cytochrome oxidase complex, the final protein carrier in the mitochondrial electron-transport chain. The sequence is that of Cytochrome c (CYC1) from Chlamydomonas reinhardtii (Chlamydomonas smithii).